Reading from the N-terminus, the 307-residue chain is MATH domain and coiled-coil domain-containing protein At3g58380 (307 aa).

Residues 6 to 132 enclose the MATH domain; that stretch reads DKKFVWVIKD…CREITIVIEV (127 aa). A coiled-coil region spans residues 238-290; the sequence is KVDWLEKKLKEVKEKKKNVDNGKARLQQIEEDLQKLNQKRLDLKDILDKEKAN.

The polypeptide is MATH domain and coiled-coil domain-containing protein At3g58380 (Arabidopsis thaliana (Mouse-ear cress)).